Reading from the N-terminus, the 625-residue chain is DELLA protein SLR1 (625 aa).

The segment at 1-34 (MKREYQEAGGSSGGGSSADMGSCKDKVMAGAAGE) is disordered. The DELLA motif motif lies at 39–43 (DELLA). The disordered stretch occupies residues 167 to 208 (TADPSAADSARDTKRMRTGGGSTSSSSSSSSSLGGGASRGSV). Positions 189–198 (TSSSSSSSSS) are enriched in low complexity. Residues 232-621 (VDTQEAGIRL…RPLIATSAWR (390 aa)) enclose the GRAS domain. The segment at 239–294 (IRLVHALLACAEAVQQENFAAAEALVKQIPTLAASQGGAMRKVAAYFGEALARRVY) is leucine repeat I (LRI). The tract at residues 241–278 (LVHALLACAEAVQQENFAAAEALVKQIPTLAASQGGAM) is required for possible homodimerization. Residues 246 to 250 (LACAE) carry the LxCxE motif motif. Residues 313-378 (HAHFYESCPY…GGPPSFRLTG (66 aa)) form a VHIID region. The short motif at 344–348 (VHVVD) is the VHIID element. A leucine repeat II (LRII) region spans residues 392 to 431 (QVGWKLAQFAHTIRVDFQYRGLVAATLADLEPFMLQPEGE). A PFYRE region spans residues 441–542 (IAVNSVFELH…EVYLGRQICN (102 aa)). The LXXLL motif motif lies at 449–453 (LHRLL). Positions 545–621 (ACEGAERTER…RPLIATSAWR (77 aa)) are SAW.

The protein belongs to the GRAS family. DELLA subfamily.

Functionally, probable transcriptional regulator that acts as a repressor of the gibberellin (GA) signaling pathway. Probably acts by participating in large multiprotein complexes that repress transcription of GA-inducible genes. Upon GA application, it is degraded by the proteasome, allowing the GA signaling pathway. In contrast, its overexpression prevents the GA signaling pathway and induces a dwarf phenotype. In Oryza sativa subsp. indica (Rice), this protein is DELLA protein SLR1.